Consider the following 164-residue polypeptide: Ubiquitin-conjugating enzyme E2 2 (164 aa).

Residues 4–150 (PARRRLMRDF…VKETVEKSWE (147 aa)) enclose the UBC core domain. Cys88 acts as the Glycyl thioester intermediate in catalysis.

This sequence belongs to the ubiquitin-conjugating enzyme family.

The protein resides in the cytoplasm. Its subcellular location is the nucleus. The catalysed reaction is S-ubiquitinyl-[E1 ubiquitin-activating enzyme]-L-cysteine + [E2 ubiquitin-conjugating enzyme]-L-cysteine = [E1 ubiquitin-activating enzyme]-L-cysteine + S-ubiquitinyl-[E2 ubiquitin-conjugating enzyme]-L-cysteine.. Its pathway is protein modification; protein ubiquitination. In terms of biological role, catalyzes the covalent attachment of ubiquitin to other proteins. Plays a role in transcription regulation by catalyzing the monoubiquitination of histone H2B to form H2BK123ub1. H2BK123ub1 gives a specific tag for epigenetic transcriptional activation and is also a prerequisite for H3K4me and H3K79me formation. Also involved in postreplication repair of UV-damaged DNA, in N-end rule-dependent protein degradation and in sporulation. The polypeptide is Ubiquitin-conjugating enzyme E2 2 (UBC2) (Kluyveromyces lactis (strain ATCC 8585 / CBS 2359 / DSM 70799 / NBRC 1267 / NRRL Y-1140 / WM37) (Yeast)).